Consider the following 1291-residue polypeptide: Capping protein-inhibiting regulator of actin dynamics (1291 aa).

Residues S7 and S28 each carry the phosphoserine modification. Disordered regions lie at residues 48-71 (KFGQ…SSEE), 84-137 (QQDI…AGTI), 159-221 (HKLA…HEEK), 234-253 (KCKR…EQRR), 267-663 (QELL…ASHA), and 701-1238 (LGLS…TSVT). Phosphoserine is present on S132. The segment covering 159-176 (HKLAVKPKNQRVSRKHRW) has biased composition (basic residues). A compositionally biased stretch (polar residues) spans 184–199 (EPGSFESQSSLDQNGQ). The span at 201-221 (GEDKHIWHGEEPEPLESHEEK) shows a compositional bias: basic and acidic residues. Residues 270-291 (LEEEEEGEEEEEVKEEGEEGEE) are compositionally biased toward acidic residues. 3 stretches are compositionally biased toward basic and acidic residues: residues 302-318 (PPEE…RCTE), 326-461 (DPAR…EDAK), and 470-483 (EAKR…KETP). The tract at residues 324-560 (ADDPARLEAE…DLDAHCGGVD (237 aa)) is required for interaction with actin-capping proteins. The residue at position 482 (T482) is a Phosphothreonine. S493 and S510 each carry phosphoserine. Basic and acidic residues-rich tracts occupy residues 506–527 (ADQR…REDL) and 534–543 (EIAEEPRGEG). The span at 580 to 593 (EGTPAPEENEATAA) shows a compositional bias: low complexity. Positions 594–612 (DIDRKVEELRWQEVDERQT) are enriched in basic and acidic residues. S636 carries the post-translational modification Phosphoserine. A Phosphothreonine modification is found at T639. Basic and acidic residues predominate over residues 749 to 778 (KNSEGDQRGDREPARAGDEPVPRARCDSRG). Position 867 is a phosphoserine (S867). The span at 875-888 (TESTTTLDSETTSD) shows a compositional bias: low complexity. A compositionally biased stretch (basic and acidic residues) spans 969–983 (QERKPALSPRKDSAE). T1033 is subject to Phosphothreonine. S1037 carries the post-translational modification Phosphoserine. The segment covering 1056–1070 (GKLDSEPSETAKESS) has biased composition (basic and acidic residues). S1076 carries the phosphoserine modification. 3 stretches are compositionally biased toward basic and acidic residues: residues 1081–1098 (EELK…EKKP), 1117–1141 (TGRK…EKVE), and 1157–1182 (GFRE…KLSK). Polar residues-rich tracts occupy residues 1183-1197 (ETVS…SRAS) and 1229-1238 (KSNTLPTSVT).

As to quaternary structure, directly interacts with actin-capping proteins CAPZA1, CAPZA2 and CAPZB; this interaction decreases the binding of capping proteins to actin. In terms of tissue distribution, expressed in the small intestine (at protein level).

It localises to the cytoplasm. The protein resides in the cytosol. In terms of biological role, involved in epithelial cell integrity by acting on the dynamics of the actin cytoskeleton. Positively regulates the actin polymerization, by inhibiting the interaction of actin-capping proteins with actin. The sequence is that of Capping protein-inhibiting regulator of actin dynamics from Mus musculus (Mouse).